Here is a 130-residue protein sequence, read N- to C-terminus: Glycine cleavage system H protein (130 aa).

In terms of domain architecture, Lipoyl-binding spans 25–106; sequence TALIGISDFA…PFDSWMIKVK (82 aa). An N6-lipoyllysine modification is found at lysine 66.

The protein belongs to the GcvH family. The glycine cleavage system is composed of four proteins: P, T, L and H. (R)-lipoate serves as cofactor.

The glycine cleavage system catalyzes the degradation of glycine. The H protein shuttles the methylamine group of glycine from the P protein to the T protein. The chain is Glycine cleavage system H protein from Leptospira borgpetersenii serovar Hardjo-bovis (strain JB197).